Consider the following 90-residue polypeptide: Small ribosomal subunit protein bS20 (90 aa).

Polar residues predominate over residues 1-10 (MANHKSTQKS). Residues 1–25 (MANHKSTQKSIRQDQKRNLINKSRK) are disordered.

Belongs to the bacterial ribosomal protein bS20 family.

Functionally, binds directly to 16S ribosomal RNA. This is Small ribosomal subunit protein bS20 from Orientia tsutsugamushi (strain Ikeda) (Rickettsia tsutsugamushi).